A 202-amino-acid chain; its full sequence is dITP/XTP pyrophosphatase (202 aa).

9 to 14 (TGNKGK) contributes to the substrate binding site. Asp-73 serves as the catalytic Proton acceptor. Asp-73 lines the Mg(2+) pocket. Residues Ser-74, 158-161 (FGYD), Lys-181, and 186-187 (HR) each bind substrate.

It belongs to the HAM1 NTPase family. As to quaternary structure, homodimer. The cofactor is Mg(2+).

It catalyses the reaction XTP + H2O = XMP + diphosphate + H(+). The catalysed reaction is dITP + H2O = dIMP + diphosphate + H(+). It carries out the reaction ITP + H2O = IMP + diphosphate + H(+). Pyrophosphatase that catalyzes the hydrolysis of nucleoside triphosphates to their monophosphate derivatives, with a high preference for the non-canonical purine nucleotides XTP (xanthosine triphosphate), dITP (deoxyinosine triphosphate) and ITP. Seems to function as a house-cleaning enzyme that removes non-canonical purine nucleotides from the nucleotide pool, thus preventing their incorporation into DNA/RNA and avoiding chromosomal lesions. This is dITP/XTP pyrophosphatase from Lactobacillus acidophilus (strain ATCC 700396 / NCK56 / N2 / NCFM).